A 178-amino-acid polypeptide reads, in one-letter code: Large ribosomal subunit protein bL25 (178 aa).

Belongs to the bacterial ribosomal protein bL25 family. CTC subfamily. Part of the 50S ribosomal subunit; part of the 5S rRNA/L5/L18/L25 subcomplex. Contacts the 5S rRNA. Binds to the 5S rRNA independently of L5 and L18.

Its function is as follows. This is one of the proteins that binds to the 5S RNA in the ribosome where it forms part of the central protuberance. The polypeptide is Large ribosomal subunit protein bL25 (Helicobacter pylori (strain HPAG1)).